The following is a 556-amino-acid chain: Dihydroxy-acid dehydratase (556 aa).

A Mg(2+)-binding site is contributed by aspartate 81. Position 122 (cysteine 122) interacts with [2Fe-2S] cluster. Positions 123 and 124 each coordinate Mg(2+). Lysine 124 carries the N6-carboxylysine modification. A [2Fe-2S] cluster-binding site is contributed by cysteine 196. A Mg(2+)-binding site is contributed by glutamate 444. Serine 470 serves as the catalytic Proton acceptor.

It belongs to the IlvD/Edd family. Homodimer. It depends on [2Fe-2S] cluster as a cofactor. Requires Mg(2+) as cofactor.

It carries out the reaction (2R)-2,3-dihydroxy-3-methylbutanoate = 3-methyl-2-oxobutanoate + H2O. It catalyses the reaction (2R,3R)-2,3-dihydroxy-3-methylpentanoate = (S)-3-methyl-2-oxopentanoate + H2O. It functions in the pathway amino-acid biosynthesis; L-isoleucine biosynthesis; L-isoleucine from 2-oxobutanoate: step 3/4. The protein operates within amino-acid biosynthesis; L-valine biosynthesis; L-valine from pyruvate: step 3/4. Functionally, functions in the biosynthesis of branched-chain amino acids. Catalyzes the dehydration of (2R,3R)-2,3-dihydroxy-3-methylpentanoate (2,3-dihydroxy-3-methylvalerate) into 2-oxo-3-methylpentanoate (2-oxo-3-methylvalerate) and of (2R)-2,3-dihydroxy-3-methylbutanoate (2,3-dihydroxyisovalerate) into 2-oxo-3-methylbutanoate (2-oxoisovalerate), the penultimate precursor to L-isoleucine and L-valine, respectively. The chain is Dihydroxy-acid dehydratase from Syntrophotalea carbinolica (strain DSM 2380 / NBRC 103641 / GraBd1) (Pelobacter carbinolicus).